A 101-amino-acid polypeptide reads, in one-letter code: ATP synthase subunit c (101 aa).

Transmembrane regions (helical) follow at residues 35-55 (IGAG…GLIG) and 81-101 (GISE…IFVV).

Belongs to the ATPase C chain family. F-type ATPases have 2 components, F(1) - the catalytic core - and F(0) - the membrane proton channel. F(1) has five subunits: alpha(3), beta(3), gamma(1), delta(1), epsilon(1). F(0) has three main subunits: a(1), b(2) and c(10-14). The alpha and beta chains form an alternating ring which encloses part of the gamma chain. F(1) is attached to F(0) by a central stalk formed by the gamma and epsilon chains, while a peripheral stalk is formed by the delta and b chains.

The protein resides in the cell membrane. F(1)F(0) ATP synthase produces ATP from ADP in the presence of a proton or sodium gradient. F-type ATPases consist of two structural domains, F(1) containing the extramembraneous catalytic core and F(0) containing the membrane proton channel, linked together by a central stalk and a peripheral stalk. During catalysis, ATP synthesis in the catalytic domain of F(1) is coupled via a rotary mechanism of the central stalk subunits to proton translocation. Its function is as follows. Key component of the F(0) channel; it plays a direct role in translocation across the membrane. A homomeric c-ring of between 10-14 subunits forms the central stalk rotor element with the F(1) delta and epsilon subunits. In Mycoplasma capricolum subsp. capricolum (strain California kid / ATCC 27343 / NCTC 10154), this protein is ATP synthase subunit c.